The chain runs to 242 residues: Probable transcriptional regulatory protein BURPS1710b_1385 (242 aa).

The protein belongs to the TACO1 family.

The protein resides in the cytoplasm. The protein is Probable transcriptional regulatory protein BURPS1710b_1385 of Burkholderia pseudomallei (strain 1710b).